A 339-amino-acid polypeptide reads, in one-letter code: MLEQLPYLALKTPPKTTALLKAECADFIVKEHLGYEMSGDGEFVALYVRKTDCNTLFVGEKLAKFAGVSERNMGYAGLKDRRAVTEQWFCLQMPGMETPDFSQFELDGVEILTVTRHNRKIRTGSLEGNYFDILLRGAEESDELKVRLDFVANFGFPNYFTEQRFGREGHNLTQALRWAQGEIKVKDRKKRSFYLSAARSEIFNLVVAARIAKGATNQVLPNDIVQLAGSHSWFKADEKEDLNALQVRLENQDILLTAPLIGEDILAASDIENEIVNQHSVFDPLMKQERMKAARRPLLMKAKGFSWAFELEGLRLKFYLPAGSYATALVRELVNYTEE.

The active-site Nucleophile is Asp-80. Residues 155-311 enclose the TRUD domain; the sequence is GFPNYFTEQR…AKGFSWAFEL (157 aa).

It belongs to the pseudouridine synthase TruD family.

The catalysed reaction is uridine(13) in tRNA = pseudouridine(13) in tRNA. Its function is as follows. Responsible for synthesis of pseudouridine from uracil-13 in transfer RNAs. The sequence is that of tRNA pseudouridine synthase D from Haemophilus influenzae (strain PittEE).